A 617-amino-acid chain; its full sequence is 1-deoxy-D-xylulose-5-phosphate synthase (617 aa).

Thiamine diphosphate is bound by residues histidine 80 and 121-123; that span reads GHS. Residue aspartate 152 participates in Mg(2+) binding. Residues 153–154, asparagine 181, tyrosine 277, and glutamate 360 each bind thiamine diphosphate; that span reads GA. Residue asparagine 181 coordinates Mg(2+).

Belongs to the transketolase family. DXPS subfamily. In terms of assembly, homodimer. It depends on Mg(2+) as a cofactor. Requires thiamine diphosphate as cofactor.

The enzyme catalyses D-glyceraldehyde 3-phosphate + pyruvate + H(+) = 1-deoxy-D-xylulose 5-phosphate + CO2. It functions in the pathway metabolic intermediate biosynthesis; 1-deoxy-D-xylulose 5-phosphate biosynthesis; 1-deoxy-D-xylulose 5-phosphate from D-glyceraldehyde 3-phosphate and pyruvate: step 1/1. Functionally, catalyzes the acyloin condensation reaction between C atoms 2 and 3 of pyruvate and glyceraldehyde 3-phosphate to yield 1-deoxy-D-xylulose-5-phosphate (DXP). In Blochmanniella floridana, this protein is 1-deoxy-D-xylulose-5-phosphate synthase.